Consider the following 363-residue polypeptide: Peptide chain release factor 2 (363 aa).

Q251 carries the N5-methylglutamine modification.

Belongs to the prokaryotic/mitochondrial release factor family. Methylated by PrmC. Methylation increases the termination efficiency of RF2.

Its subcellular location is the cytoplasm. Its function is as follows. Peptide chain release factor 2 directs the termination of translation in response to the peptide chain termination codons UGA and UAA. The sequence is that of Peptide chain release factor 2 from Helicobacter acinonychis (strain Sheeba).